A 150-amino-acid polypeptide reads, in one-letter code: Bcl-2-interacting killer (150 aa).

The BH3 motif lies at 51-65 (VALRLACIGDEMDLC). Residues 127–147 (PGQLFPMVLLVFLLLGGAWYL) traverse the membrane as a helical segment. The segment at 127 to 148 (PGQLFPMVLLVFLLLGGAWYLQ) is leucine-zipper.

In terms of assembly, interacts with RHBDL4/RHBDD1. Interacts with BCL2L10/BCL-B. In terms of processing, proteolytically cleaved by RHBDL4/RHBDD1. RHBDL4/RHBDD1-induced cleavage is a necessary step prior its degradation by the proteosome-dependent mechanism. Post-translationally, ubiquitinated by the ECS(ASB11) complex in response to endoplasmic reticulum stress, leading to substrate recognition by the segregase p97/VCP and degradation by the proteasome. In terms of tissue distribution, expressed in testis, kidney, liver, lung and heart.

Its subcellular location is the endomembrane system. It is found in the mitochondrion membrane. Accelerates programmed cell death. Binding to the apoptosis repressors Bcl-X(L), BHRF1 or Bcl-2 suppresses this death-promoting activity. This is Bcl-2-interacting killer (Bik) from Mus musculus (Mouse).